Reading from the N-terminus, the 31-residue chain is Cytochrome b6-f complex subunit 6 (31 aa).

The helical transmembrane segment at Ile4–Gly24 threads the bilayer.

It belongs to the PetL family. As to quaternary structure, the 4 large subunits of the cytochrome b6-f complex are cytochrome b6, subunit IV (17 kDa polypeptide, PetD), cytochrome f and the Rieske protein, while the 4 small subunits are PetG, PetL, PetM and PetN. The complex functions as a dimer.

It is found in the plastid. The protein localises to the chloroplast thylakoid membrane. Its function is as follows. Component of the cytochrome b6-f complex, which mediates electron transfer between photosystem II (PSII) and photosystem I (PSI), cyclic electron flow around PSI, and state transitions. PetL is important for photoautotrophic growth as well as for electron transfer efficiency and stability of the cytochrome b6-f complex. The chain is Cytochrome b6-f complex subunit 6 from Marchantia polymorpha (Common liverwort).